The following is a 339-amino-acid chain: Exopolyphosphatase 1 (339 aa).

A disordered region spans residues 315–339 (QTSVRDTRGQEVDRNAANRSRGDKT). The segment covering 319–339 (RDTRGQEVDRNAANRSRGDKT) has biased composition (basic and acidic residues).

This sequence belongs to the GppA/Ppx family. Homodimer.

The enzyme catalyses [phosphate](n) + H2O = [phosphate](n-1) + phosphate + H(+). Its function is as follows. Degradation of inorganic polyphosphates (polyP). Releases orthophosphate processively from the ends of the polyP chain. This is Exopolyphosphatase 1 from Mycobacterium leprae (strain TN).